We begin with the raw amino-acid sequence, 256 residues long: MRNSPVSPGPGYAPARGSERARRRGVARWLAYVGGVFAGAWLATQLYYAVQIAMWSVFDPGSSAFMRADAWRLSNAQPATTIRHRWVPYDQIARTLKRAVIASEDADFANNSGYEVDAILQAWEKNRARGRIVSGGSTITQQLARNLFLSGERSYIRKGQELIITWMLETLLDKERIFEIYLNSVEFGRGVYGAQAAAQYYYRIPASRLSAWQSARLAVMLPNPKYFDAHRGSPYLAQRAGVIARRMGAAELPASQ.

Residues 26-48 (VARWLAYVGGVFAGAWLATQLYY) traverse the membrane as a helical segment.

It belongs to the glycosyltransferase 51 family.

The protein resides in the cell inner membrane. The catalysed reaction is [GlcNAc-(1-&gt;4)-Mur2Ac(oyl-L-Ala-gamma-D-Glu-L-Lys-D-Ala-D-Ala)](n)-di-trans,octa-cis-undecaprenyl diphosphate + beta-D-GlcNAc-(1-&gt;4)-Mur2Ac(oyl-L-Ala-gamma-D-Glu-L-Lys-D-Ala-D-Ala)-di-trans,octa-cis-undecaprenyl diphosphate = [GlcNAc-(1-&gt;4)-Mur2Ac(oyl-L-Ala-gamma-D-Glu-L-Lys-D-Ala-D-Ala)](n+1)-di-trans,octa-cis-undecaprenyl diphosphate + di-trans,octa-cis-undecaprenyl diphosphate + H(+). Its pathway is cell wall biogenesis; peptidoglycan biosynthesis. Functionally, peptidoglycan polymerase that catalyzes glycan chain elongation from lipid-linked precursors. The polypeptide is Biosynthetic peptidoglycan transglycosylase (Burkholderia pseudomallei (strain K96243)).